Here is a 171-residue protein sequence, read N- to C-terminus: Adenine phosphoribosyltransferase (171 aa).

It belongs to the purine/pyrimidine phosphoribosyltransferase family. As to quaternary structure, homodimer.

Its subcellular location is the cytoplasm. The catalysed reaction is AMP + diphosphate = 5-phospho-alpha-D-ribose 1-diphosphate + adenine. Its pathway is purine metabolism; AMP biosynthesis via salvage pathway; AMP from adenine: step 1/1. Functionally, catalyzes a salvage reaction resulting in the formation of AMP, that is energically less costly than de novo synthesis. This Acetivibrio thermocellus (strain ATCC 27405 / DSM 1237 / JCM 9322 / NBRC 103400 / NCIMB 10682 / NRRL B-4536 / VPI 7372) (Clostridium thermocellum) protein is Adenine phosphoribosyltransferase.